The following is a 220-amino-acid chain: Deoxyribose-phosphate aldolase 1 (220 aa).

The Proton donor/acceptor role is filled by aspartate 89. Lysine 151 acts as the Schiff-base intermediate with acetaldehyde in catalysis. Lysine 180 serves as the catalytic Proton donor/acceptor.

The protein belongs to the DeoC/FbaB aldolase family. DeoC type 1 subfamily.

Its subcellular location is the cytoplasm. The catalysed reaction is 2-deoxy-D-ribose 5-phosphate = D-glyceraldehyde 3-phosphate + acetaldehyde. It functions in the pathway carbohydrate degradation; 2-deoxy-D-ribose 1-phosphate degradation; D-glyceraldehyde 3-phosphate and acetaldehyde from 2-deoxy-alpha-D-ribose 1-phosphate: step 2/2. In terms of biological role, catalyzes a reversible aldol reaction between acetaldehyde and D-glyceraldehyde 3-phosphate to generate 2-deoxy-D-ribose 5-phosphate. This Staphylococcus aureus (strain bovine RF122 / ET3-1) protein is Deoxyribose-phosphate aldolase 1.